A 396-amino-acid chain; its full sequence is NADH-quinone oxidoreductase subunit D (396 aa).

It belongs to the complex I 49 kDa subunit family. In terms of assembly, NDH-1 is composed of 14 different subunits. Subunits NuoB, C, D, E, F, and G constitute the peripheral sector of the complex.

Its subcellular location is the cell inner membrane. It carries out the reaction a quinone + NADH + 5 H(+)(in) = a quinol + NAD(+) + 4 H(+)(out). In terms of biological role, NDH-1 shuttles electrons from NADH, via FMN and iron-sulfur (Fe-S) centers, to quinones in the respiratory chain. The immediate electron acceptor for the enzyme in this species is believed to be ubiquinone. Couples the redox reaction to proton translocation (for every two electrons transferred, four hydrogen ions are translocated across the cytoplasmic membrane), and thus conserves the redox energy in a proton gradient. This is NADH-quinone oxidoreductase subunit D from Bartonella quintana (strain Toulouse) (Rochalimaea quintana).